The primary structure comprises 207 residues: Large ribosomal subunit protein uL4 (207 aa).

Residues 50–75 (KTKTVSEVSGTTKKPFKQKGTGNARQ) form a disordered region.

This sequence belongs to the universal ribosomal protein uL4 family. As to quaternary structure, part of the 50S ribosomal subunit.

One of the primary rRNA binding proteins, this protein initially binds near the 5'-end of the 23S rRNA. It is important during the early stages of 50S assembly. It makes multiple contacts with different domains of the 23S rRNA in the assembled 50S subunit and ribosome. In terms of biological role, forms part of the polypeptide exit tunnel. This Rickettsia akari (strain Hartford) protein is Large ribosomal subunit protein uL4.